The sequence spans 157 residues: Small ribosomal subunit protein uS7 (157 aa).

Belongs to the universal ribosomal protein uS7 family. Part of the 30S ribosomal subunit. Contacts proteins S9 and S11.

Its function is as follows. One of the primary rRNA binding proteins, it binds directly to 16S rRNA where it nucleates assembly of the head domain of the 30S subunit. Is located at the subunit interface close to the decoding center, probably blocks exit of the E-site tRNA. In Stenotrophomonas maltophilia (strain R551-3), this protein is Small ribosomal subunit protein uS7.